A 150-amino-acid polypeptide reads, in one-letter code: Transcriptional repressor NrdR (150 aa).

Residues Cys3–Cys34 fold into a zinc finger. Residues Leu46 to Asp136 enclose the ATP-cone domain.

Belongs to the NrdR family. The cofactor is Zn(2+).

Functionally, negatively regulates transcription of bacterial ribonucleotide reductase nrd genes and operons by binding to NrdR-boxes. In Corynebacterium glutamicum (strain ATCC 13032 / DSM 20300 / JCM 1318 / BCRC 11384 / CCUG 27702 / LMG 3730 / NBRC 12168 / NCIMB 10025 / NRRL B-2784 / 534), this protein is Transcriptional repressor NrdR.